The chain runs to 183 residues: GMP synthase [glutamine-hydrolyzing] subunit A (183 aa).

Positions 2–183 constitute a Glutamine amidotransferase type-1 domain; the sequence is KIYVIYNYGQ…YRNFIEICKK (182 aa). The active-site Nucleophile is the Cys-74. Active-site residues include His-161 and Glu-163.

As to quaternary structure, heterodimer composed of a glutamine amidotransferase subunit (A) and a GMP-binding subunit (B).

It carries out the reaction XMP + L-glutamine + ATP + H2O = GMP + L-glutamate + AMP + diphosphate + 2 H(+). It participates in purine metabolism; GMP biosynthesis; GMP from XMP (L-Gln route): step 1/1. Its function is as follows. Catalyzes the synthesis of GMP from XMP. This chain is GMP synthase [glutamine-hydrolyzing] subunit A, found in Archaeoglobus fulgidus (strain ATCC 49558 / DSM 4304 / JCM 9628 / NBRC 100126 / VC-16).